A 206-amino-acid polypeptide reads, in one-letter code: Large ribosomal subunit protein uL4 (206 aa).

Residues 55-80 are disordered; that stretch reads AFVSGGGAKPWRQKGTGRARSGSNRS.

It belongs to the universal ribosomal protein uL4 family. Part of the 50S ribosomal subunit.

One of the primary rRNA binding proteins, this protein initially binds near the 5'-end of the 23S rRNA. It is important during the early stages of 50S assembly. It makes multiple contacts with different domains of the 23S rRNA in the assembled 50S subunit and ribosome. In terms of biological role, forms part of the polypeptide exit tunnel. The sequence is that of Large ribosomal subunit protein uL4 from Nitratidesulfovibrio vulgaris (strain DSM 19637 / Miyazaki F) (Desulfovibrio vulgaris).